The primary structure comprises 809 residues: Probable replication endonuclease from prophage-like region (809 aa).

Catalysis depends on O-(5'-phospho-DNA)-tyrosine intermediate residues Tyr-503 and Tyr-507.

The protein belongs to the phage GPA family.

In terms of biological role, possible endonuclease which induces a single-strand cut and initiates DNA replication. In Salmonella typhimurium (strain LT2 / SGSC1412 / ATCC 700720), this protein is Probable replication endonuclease from prophage-like region.